A 610-amino-acid polypeptide reads, in one-letter code: Sterol O-acyltransferase 1 (610 aa).

A phosphoserine mark is found at Ser21 and Ser45. The segment at 41-81 (SMEVSPRSSTTSLVEPVESTEGVESTEAERVAGKQEQEEEY) is disordered. Basic and acidic residues predominate over residues 67–76 (EAERVAGKQE). Transmembrane regions (helical) follow at residues 182–202 (LESN…WIAI), 229–249 (LFTI…VVFV), 264–284 (GFVA…PIYV), 371–391 (ISCS…QINY), and 409–429 (IIGT…PVAM). An FYXDWWN motif motif is present at residues 491-497 (FYGDWWN). 2 consecutive transmembrane segments (helical) span residues 535-555 (ATLF…FAIF) and 590-610 (VVFS…YLTL). His547 is a catalytic residue.

Belongs to the membrane-bound acyltransferase family. Sterol o-acyltransferase subfamily.

The protein resides in the endoplasmic reticulum membrane. The catalysed reaction is lanosterol + an acyl-CoA = lanosteryl ester + CoA. Its function is as follows. Sterol O-acyltransferase that catalyzes the formation of stery esters. This chain is Sterol O-acyltransferase 1, found in Saccharomyces cerevisiae (strain ATCC 204508 / S288c) (Baker's yeast).